The chain runs to 294 residues: 2-dehydropantoate 2-reductase (294 aa).

Residues 10–15 (GAGALG), Arg34, Lys74, Asn98, and Ala122 contribute to the NADP(+) site. Lys178 serves as the catalytic Proton donor. Substrate contacts are provided by residues Lys178, Asn182, Asn186, Asn196, and 243-246 (NRSS). Glu258 lines the NADP(+) pocket.

Belongs to the ketopantoate reductase family.

It is found in the cytoplasm. It carries out the reaction (R)-pantoate + NAD(+) = 2-dehydropantoate + NADH + H(+). The catalysed reaction is (R)-pantoate + NADP(+) = 2-dehydropantoate + NADPH + H(+). It functions in the pathway cofactor biosynthesis; coenzyme A biosynthesis. In terms of biological role, catalyzes the NAD(P)H-dependent reduction of ketopantoate into pantoic acid. The chain is 2-dehydropantoate 2-reductase from Archaeoglobus fulgidus (strain ATCC 49558 / DSM 4304 / JCM 9628 / NBRC 100126 / VC-16).